Consider the following 216-residue polypeptide: Uracil-DNA glycosylase (216 aa).

The active-site Proton acceptor is Asp-59.

Belongs to the uracil-DNA glycosylase (UDG) superfamily. UNG family.

The protein resides in the cytoplasm. The enzyme catalyses Hydrolyzes single-stranded DNA or mismatched double-stranded DNA and polynucleotides, releasing free uracil.. In terms of biological role, excises uracil residues from the DNA which can arise as a result of misincorporation of dUMP residues by DNA polymerase or due to deamination of cytosine. This chain is Uracil-DNA glycosylase, found in Staphylococcus epidermidis (strain ATCC 12228 / FDA PCI 1200).